The following is a 57-amino-acid chain: Large ribosomal subunit protein bL32 (57 aa).

This sequence belongs to the bacterial ribosomal protein bL32 family.

The sequence is that of Large ribosomal subunit protein bL32 from Staphylococcus aureus (strain MSSA476).